The primary structure comprises 349 residues: Phosphoribosylformylglycinamidine cyclo-ligase (349 aa).

It belongs to the AIR synthase family.

The protein localises to the cytoplasm. It carries out the reaction 2-formamido-N(1)-(5-O-phospho-beta-D-ribosyl)acetamidine + ATP = 5-amino-1-(5-phospho-beta-D-ribosyl)imidazole + ADP + phosphate + H(+). It participates in purine metabolism; IMP biosynthesis via de novo pathway; 5-amino-1-(5-phospho-D-ribosyl)imidazole from N(2)-formyl-N(1)-(5-phospho-D-ribosyl)glycinamide: step 2/2. The sequence is that of Phosphoribosylformylglycinamidine cyclo-ligase from Methanococcus vannielii (strain ATCC 35089 / DSM 1224 / JCM 13029 / OCM 148 / SB).